A 274-amino-acid polypeptide reads, in one-letter code: Protein LIKE COV 3 (274 aa).

Over 1-60 (METRERDLERLIPMHKSGASPRDVVLSVPPSPLASPIHVAGKEAIYKVIRSWASKKFMTG) the chain is Cytoplasmic. The helical transmembrane segment at 61–81 (CVILLPIAVTFYFTWWFIHFV) threads the bilayer. Residues 82 to 93 (DGFFSPIYTHLG) are Extracellular-facing. Residues 94-114 (INMFGLGFVTSITFIFMVGVF) form a helical membrane-spanning segment. Topologically, residues 115-274 (MSSWLGASVL…VCLSLVLAWT (160 aa)) are cytoplasmic.

Belongs to the plant COV1 protein family.

The protein localises to the membrane. This chain is Protein LIKE COV 3, found in Arabidopsis thaliana (Mouse-ear cress).